We begin with the raw amino-acid sequence, 208 residues long: MVDNKDFNEELKESIQEELDNETKSENPNIDEEVEEVSEDIKADEKVIDFEELKALKEENTMFKSKTKKLENELEALKDRLLRISSEYENYRKRTDKEKERIYTDACEDVLIKMLPVLDNLERALAVDGTVEDLKKGVEMTVRQFEDALEKLQVEEISTENGFDPELHQAMMVVEQEGSEPNQVAQVFQKGYKRGDKVIRHSMVTVTK.

The segment covering 1–25 (MVDNKDFNEELKESIQEELDNETKS) has biased composition (basic and acidic residues). Positions 1 to 38 (MVDNKDFNEELKESIQEELDNETKSENPNIDEEVEEVS) are disordered. The span at 29–38 (NIDEEVEEVS) shows a compositional bias: acidic residues.

This sequence belongs to the GrpE family. As to quaternary structure, homodimer.

It localises to the cytoplasm. Functionally, participates actively in the response to hyperosmotic and heat shock by preventing the aggregation of stress-denatured proteins, in association with DnaK and GrpE. It is the nucleotide exchange factor for DnaK and may function as a thermosensor. Unfolded proteins bind initially to DnaJ; upon interaction with the DnaJ-bound protein, DnaK hydrolyzes its bound ATP, resulting in the formation of a stable complex. GrpE releases ADP from DnaK; ATP binding to DnaK triggers the release of the substrate protein, thus completing the reaction cycle. Several rounds of ATP-dependent interactions between DnaJ, DnaK and GrpE are required for fully efficient folding. The protein is Protein GrpE of Clostridium perfringens (strain SM101 / Type A).